Reading from the N-terminus, the 317-residue chain is MLTFQQIILKLQSYWADQGCALLQPYDMEVGAGTSHTATFLRALGPEPWKAAYVQPSRRPKDGRYGENPNRLQHYYQYQVVLKPAPDNILELYLGSLEALGFDLKKNDIRFVEDDWENPTLGAWGLGWEVWLNGMEVTQFTYFQQVGGIDCKPATGEITYGLERLAMYLQGVDNVYNLTWTEGPNGAKLTYGDVYHQNEVEQSTYNFEHSDAEFLFTAFGAHEKQANHLMGEQLALPAYEQVLKAAHTFNLLDARGAISVTERAAYIGRIRNLARAVAKAYLDSRARLGFPMAPKAHADEVLAELAKAAEQQNKKAA.

The protein belongs to the class-II aminoacyl-tRNA synthetase family. As to quaternary structure, tetramer of two alpha and two beta subunits.

The protein resides in the cytoplasm. It carries out the reaction tRNA(Gly) + glycine + ATP = glycyl-tRNA(Gly) + AMP + diphosphate. The polypeptide is Glycine--tRNA ligase alpha subunit (Acidovorax ebreus (strain TPSY) (Diaphorobacter sp. (strain TPSY))).